The following is a 443-amino-acid chain: ATP-dependent protease ATPase subunit HslU (443 aa).

Residues I18, 60-65 (GVGKTE), D256, E321, and R393 each bind ATP.

This sequence belongs to the ClpX chaperone family. HslU subfamily. A double ring-shaped homohexamer of HslV is capped on each side by a ring-shaped HslU homohexamer. The assembly of the HslU/HslV complex is dependent on binding of ATP.

The protein resides in the cytoplasm. In terms of biological role, ATPase subunit of a proteasome-like degradation complex; this subunit has chaperone activity. The binding of ATP and its subsequent hydrolysis by HslU are essential for unfolding of protein substrates subsequently hydrolyzed by HslV. HslU recognizes the N-terminal part of its protein substrates and unfolds these before they are guided to HslV for hydrolysis. The chain is ATP-dependent protease ATPase subunit HslU from Salmonella typhi.